The following is a 274-amino-acid chain: NADPH-dependent 7-cyano-7-deazaguanine reductase (274 aa).

Position 80-82 (80-82 (VES)) interacts with substrate. 82 to 83 (SK) contributes to the NADPH binding site. Cysteine 181 acts as the Thioimide intermediate in catalysis. Residue aspartate 188 is the Proton donor of the active site. 220 to 221 (HE) contributes to the substrate binding site. An NADPH-binding site is contributed by 249–250 (RG).

Belongs to the GTP cyclohydrolase I family. QueF type 2 subfamily. Homodimer.

It localises to the cytoplasm. The catalysed reaction is 7-aminomethyl-7-carbaguanine + 2 NADP(+) = 7-cyano-7-deazaguanine + 2 NADPH + 3 H(+). Its pathway is tRNA modification; tRNA-queuosine biosynthesis. Catalyzes the NADPH-dependent reduction of 7-cyano-7-deazaguanine (preQ0) to 7-aminomethyl-7-deazaguanine (preQ1). This is NADPH-dependent 7-cyano-7-deazaguanine reductase from Burkholderia lata (strain ATCC 17760 / DSM 23089 / LMG 22485 / NCIMB 9086 / R18194 / 383).